We begin with the raw amino-acid sequence, 285 residues long: Diaminopimelate epimerase (285 aa).

2 residues coordinate substrate: N15 and N68. The active-site Proton donor is the C77. Residues 78–79 (GN), N165, N201, and 219–220 (ER) contribute to the substrate site. C228 (proton acceptor) is an active-site residue. A substrate-binding site is contributed by 229–230 (GT).

Belongs to the diaminopimelate epimerase family. As to quaternary structure, homodimer.

It localises to the cytoplasm. It carries out the reaction (2S,6S)-2,6-diaminopimelate = meso-2,6-diaminopimelate. It participates in amino-acid biosynthesis; L-lysine biosynthesis via DAP pathway; DL-2,6-diaminopimelate from LL-2,6-diaminopimelate: step 1/1. In terms of biological role, catalyzes the stereoinversion of LL-2,6-diaminopimelate (L,L-DAP) to meso-diaminopimelate (meso-DAP), a precursor of L-lysine and an essential component of the bacterial peptidoglycan. The sequence is that of Diaminopimelate epimerase from Synechococcus sp. (strain JA-2-3B'a(2-13)) (Cyanobacteria bacterium Yellowstone B-Prime).